The following is a 329-amino-acid chain: 4-methyl-2-oxopentanoate reductase A (329 aa).

Residues 162–163 (GI), 240–242 (TAR), and aspartate 266 each bind NAD(+). Residue arginine 242 is part of the active site. Glutamate 271 is an active-site residue. Residue histidine 289 is the Proton donor of the active site.

The protein belongs to the D-isomer specific 2-hydroxyacid dehydrogenase family.

It carries out the reaction (2R)-hydroxy-4-methylpentanoate + NADP(+) = 4-methyl-2-oxopentanoate + NADPH + H(+). The enzyme catalyses a (2R)-2-hydroxycarboxylate + NADP(+) = a 2-oxocarboxylate + NADPH + H(+). Functionally, 4-methyl-2-oxopentanoate (MOA) reductase that reduces MOA, a possible intermediate in leucine synthesis, to D-leucate in a NADPH- or NADH-dependent manner, but with a preference for NADPH. In addition to MOA, shows broad substrate specificity toward 2-keto acids. The polypeptide is 4-methyl-2-oxopentanoate reductase A (Aspergillus oryzae (strain ATCC 42149 / RIB 40) (Yellow koji mold)).